The chain runs to 264 residues: NAD kinase 1 (264 aa).

Aspartate 45 (proton acceptor) is an active-site residue. NAD(+)-binding positions include 45 to 46 (DG), 122 to 123 (NE), arginine 148, aspartate 150, 161 to 166 (TAYNKS), and alanine 185.

It belongs to the NAD kinase family. The cofactor is a divalent metal cation.

The protein resides in the cytoplasm. The catalysed reaction is NAD(+) + ATP = ADP + NADP(+) + H(+). In terms of biological role, involved in the regulation of the intracellular balance of NAD and NADP, and is a key enzyme in the biosynthesis of NADP. Catalyzes specifically the phosphorylation on 2'-hydroxyl of the adenosine moiety of NAD to yield NADP. The protein is NAD kinase 1 of Listeria innocua serovar 6a (strain ATCC BAA-680 / CLIP 11262).